Consider the following 469-residue polypeptide: Tubulin gamma-1 chain (469 aa).

Position 142–148 (142–148 (AGGTGSG)) interacts with GTP.

Belongs to the tubulin family.

It is found in the cytoplasm. It localises to the cytoskeleton. The protein resides in the microtubule organizing center. Functionally, tubulin is the major constituent of microtubules. The gamma chain is found at microtubule organizing centers (MTOC) such as the spindle poles, suggesting that it is involved in the minus-end nucleation of microtubule assembly. This Zea mays (Maize) protein is Tubulin gamma-1 chain (TUBG1).